The following is a 583-amino-acid chain: Radixin (583 aa).

The FERM domain occupies 5–295 (INVRVTTMDA…GNHELYMRRR (291 aa)). A 1,2-diacyl-sn-glycero-3-phospho-(1D-myo-inositol)-binding positions include 60–63 (KLNK) and K278. Disordered stretches follow at residues 310 to 336 (REEK…AEKE) and 436 to 527 (KKKE…VKKQ). Composition is skewed to basic and acidic residues over residues 436 to 447 (KKKEEEASEWQH) and 455 to 464 (DLEKTKEELK). Over residues 469–480 (APPPPPPPPVIP) the composition is skewed to pro residues. Basic and acidic residues-rich tracts occupy residues 483–492 (ENEHDEHDEN) and 506–525 (MNHR…ERVK).

The protein localises to the cell membrane. It is found in the cytoplasm. The protein resides in the cytoskeleton. Its function is as follows. Probably plays a crucial role in the binding of the barbed end of actin filaments to the plasma membrane. This chain is Radixin (RDX), found in Gallus gallus (Chicken).